Consider the following 259-residue polypeptide: MHNELNNHTITYSEDISNNISSKNNEKFTPKEIQILDKNKKFFSTDIKYVLTMLKIINGESDISIRVLDWFVANYSKKNNTYYNIKKNGKCDRFYVHNEYKNQLNGYSKQYFDPFCRKKKVAYKYTDKISKNVIQFESSIGQLNFFQWAIRNKIIRYVELHLKIIEEDMKETTKKNKEKKQNSQSQEISNSIEMEVSDDPDPNICLSSSINSICLSPVKKTSSASKSDSDKKNKRQQLSKSVYDHGIKKYDYPIQLDFD.

The stretch at 158-187 (VELHLKIIEEDMKETTKKNKEKKQNSQSQE) forms a coiled coil. A compositionally biased stretch (basic and acidic residues) spans 172–181 (TTKKNKEKKQ). Disordered regions lie at residues 172-197 (TTKK…MEVS) and 217-240 (PVKK…QLSK). Low complexity-rich tracts occupy residues 182–193 (NSQSQEISNSIE) and 217–226 (PVKKTSSASK).

This is an uncharacterized protein from Acanthamoeba polyphaga mimivirus (APMV).